Consider the following 546-residue polypeptide: Acyl-CoA ligase oryP (546 aa).

Residues 166–174, 300–305, and Arg403 each bind ATP; these read TSGTTGAPK and QFWLNL. CoA is bound by residues 412–414 and 482–484; these read WDH and LLR. ATP is bound at residue Lys499.

The protein belongs to the ATP-dependent AMP-binding enzyme family.

It participates in secondary metabolite biosynthesis. Its function is as follows. Acyl-CoA ligase; part of the gene cluster that mediates the biosynthesis of oryzines, natural products with an unusual maleidride backbone. The two subunits of the fungal fatty acid synthase oryfasA and oryfasB probably form octenoic acid. This fatty acid is most likely activated by the acyl-CoA ligase oryP to give octenyl-CoA before the citrate synthase-like protein oryE catalyzes condensation with oxaloacetate to form tricarboxylic acid. The next steps of the pathways are conjectural, but a favorite possible route has been proposed, beginning with decarboxylation and concomitant dehydration by the decarboxylase oryM, followed by tautomerization, which may lead to the production of a diene intermediate. Reduction of this diene intermediate could give the known metabolite piliformic acid. On the pathway to oryzine B and oryzine A, however, hydroxylation of the diene by the alpha-ketoglutarate-dependent dioxygenase oryG and lactonisation by the lactonohydrolases oryH or oryL could give oryzine B directly. Finally, enoyl reduction by the dehydrogenase oryD would then convert oryzine B into oryzine A. This Aspergillus oryzae (strain ATCC 42149 / RIB 40) (Yellow koji mold) protein is Acyl-CoA ligase oryP.